We begin with the raw amino-acid sequence, 455 residues long: Golgi pH regulator (455 aa).

5 helical membrane-spanning segments follow: residues 5–25 (IDSS…WLFF), 46–66 (VTFA…LGVL), 79–99 (LCVI…YFIV), 114–134 (CLLW…FPIL), and 150–170 (VGVI…VNCP). An N-linked (GlcNAc...) asparagine glycan is attached at asparagine 180. 4 helical membrane-spanning segments follow: residues 288 to 308 (FLGY…TINI), 343 to 363 (ISFI…LITL), 378 to 398 (VIVL…VLLI), and 425 to 445 (WFDV…YLAH).

The protein belongs to the Golgi pH regulator (TC 1.A.38) family. In terms of assembly, homotrimer. Interacts with RABL3; the interaction stabilizes GPR89.

It is found in the golgi apparatus membrane. It catalyses the reaction iodide(out) = iodide(in). It carries out the reaction chloride(in) = chloride(out). The catalysed reaction is bromide(in) = bromide(out). The enzyme catalyses fluoride(in) = fluoride(out). Functionally, voltage-gated channel that enables the transfer of monoatomic anions such as iodide, chloride, bromide and fluoride which may function in counter-ion conductance and participates in Golgi acidification. Plays a role in lymphocyte development, probably by acting as a RABL3 effector in hematopoietic cells. The polypeptide is Golgi pH regulator (Mus musculus (Mouse)).